The chain runs to 366 residues: tRNA/tmRNA (uracil-C(5))-methyltransferase (366 aa).

Residues Q190, Y218, N223, E239, and D299 each coordinate S-adenosyl-L-methionine. The Nucleophile role is filled by C324. The Proton acceptor role is filled by E358.

This sequence belongs to the class I-like SAM-binding methyltransferase superfamily. RNA M5U methyltransferase family. TrmA subfamily.

The catalysed reaction is uridine(54) in tRNA + S-adenosyl-L-methionine = 5-methyluridine(54) in tRNA + S-adenosyl-L-homocysteine + H(+). It carries out the reaction uridine(341) in tmRNA + S-adenosyl-L-methionine = 5-methyluridine(341) in tmRNA + S-adenosyl-L-homocysteine + H(+). Dual-specificity methyltransferase that catalyzes the formation of 5-methyluridine at position 54 (m5U54) in all tRNAs, and that of position 341 (m5U341) in tmRNA (transfer-mRNA). This Salmonella agona (strain SL483) protein is tRNA/tmRNA (uracil-C(5))-methyltransferase.